Reading from the N-terminus, the 185-residue chain is Ribosome-recycling factor (185 aa).

Belongs to the RRF family.

Its subcellular location is the cytoplasm. Its function is as follows. Responsible for the release of ribosomes from messenger RNA at the termination of protein biosynthesis. May increase the efficiency of translation by recycling ribosomes from one round of translation to another. This chain is Ribosome-recycling factor, found in Shewanella pealeana (strain ATCC 700345 / ANG-SQ1).